The sequence spans 228 residues: Eukaryotic translation initiation factor 4E-1 (228 aa).

EIF4G-binding stretches follow at residues 53–56 (HLLE) and 63–99 (FDTP…NNIH). Residues 71 to 76 (KQDDWG), K103, and 121 to 122 (WE) contribute to the mRNA site. Residues C126 and C164 are joined by a disulfide bond. Residues 147-156 (YTLLAMIGEQ) form an EIF4G-binding region. Residues 171–176 (RGRAEK) and 216–220 (RKLDR) each bind mRNA.

Belongs to the eukaryotic initiation factor 4E family. As to quaternary structure, EIF4F is a multi-subunit complex, the composition of which varies with external and internal environmental conditions. It is composed of at least EIF4A, EIF4E and EIF4G. EIF4E is also known to interact with other partners. In higher plants two isoforms of EIF4F have been identified, named isoform EIF4F and isoform EIF(iso)4F. Isoform EIF4F has subunits p220 and p26, whereas isoform EIF(iso)4F has subunits p82 and p28. (Microbial infection) Interacts with potyvirus viral genome-linked protein (VPg); this interaction is possible in susceptible hosts but impaired in resistant plants. In terms of processing, according to the redox status, the Cys-126-Cys-164 disulfide bridge may have a role in regulating protein function by affecting its ability to bind capped mRNA.

It is found in the nucleus. The protein resides in the cytoplasm. Functionally, component of the protein complex eIF4F, which is involved in the recognition of the mRNA cap, ATP-dependent unwinding of 5'-terminal secondary structure and recruitment of mRNA to the ribosome. Recognizes and binds the 7-methylguanosine-containing mRNA cap during an early step in the initiation of protein synthesis and facilitates ribosome binding by inducing the unwinding of the mRNAs secondary structures. Key component of recessive resistance to potyviruses. (Microbial infection) Susceptibility host factor required for viral infection by recruiting viral RNAs to the host ribosomal complex via an interaction with viral genome-linked protein (VPg). Also seems to be involved in virus movement from cell-to-cell. This is Eukaryotic translation initiation factor 4E-1 from Pisum sativum (Garden pea).